The sequence spans 208 residues: Protein-L-isoaspartate O-methyltransferase (208 aa).

Residue Ser-59 is part of the active site.

Belongs to the methyltransferase superfamily. L-isoaspartyl/D-aspartyl protein methyltransferase family.

The protein localises to the cytoplasm. It carries out the reaction [protein]-L-isoaspartate + S-adenosyl-L-methionine = [protein]-L-isoaspartate alpha-methyl ester + S-adenosyl-L-homocysteine. Its function is as follows. Catalyzes the methyl esterification of L-isoaspartyl residues in peptides and proteins that result from spontaneous decomposition of normal L-aspartyl and L-asparaginyl residues. It plays a role in the repair and/or degradation of damaged proteins. This chain is Protein-L-isoaspartate O-methyltransferase, found in Escherichia coli O7:K1 (strain IAI39 / ExPEC).